We begin with the raw amino-acid sequence, 2288 residues long: Protein Ycf2 (2288 aa).

1629-1636 contributes to the ATP binding site; the sequence is GSIGTGRS.

Belongs to the Ycf2 family.

The protein localises to the plastid. Its subcellular location is the chloroplast stroma. Functionally, probable ATPase of unknown function. Its presence in a non-photosynthetic plant (Epifagus virginiana) and experiments in tobacco indicate that it has an essential function which is probably not related to photosynthesis. The chain is Protein Ycf2 from Phaseolus vulgaris (Kidney bean).